The following is a 448-amino-acid chain: Probable glycine dehydrogenase (decarboxylating) subunit 1 (448 aa).

This sequence belongs to the GcvP family. N-terminal subunit subfamily. The glycine cleavage system is composed of four proteins: P, T, L and H. In this organism, the P 'protein' is a heterodimer of two subunits.

The catalysed reaction is N(6)-[(R)-lipoyl]-L-lysyl-[glycine-cleavage complex H protein] + glycine + H(+) = N(6)-[(R)-S(8)-aminomethyldihydrolipoyl]-L-lysyl-[glycine-cleavage complex H protein] + CO2. In terms of biological role, the glycine cleavage system catalyzes the degradation of glycine. The P protein binds the alpha-amino group of glycine through its pyridoxal phosphate cofactor; CO(2) is released and the remaining methylamine moiety is then transferred to the lipoamide cofactor of the H protein. The polypeptide is Probable glycine dehydrogenase (decarboxylating) subunit 1 (Bacillus pumilus (strain SAFR-032)).